Here is a 603-residue protein sequence, read N- to C-terminus: Insulin-like growth factor-binding protein complex acid labile subunit (603 aa).

Residues Met1–Cys23 form the signal peptide. Residues Ala32 to Val74 form the LRRNT domain. 2 disulfides stabilise this stretch: Cys41–Cys47 and Cys45–Cys60. N-linked (GlcNAc...) asparagine glycans are attached at residues Asn64, Asn85, and Asn96. 19 LRR repeats span residues Ser75–Asn96, Ser99–Gly120, Asn123–His144, Ser147–Gly168, His171–Gly192, Asn195–Gly216, Glu219–His240, Arg243–Gly264, Ala267–Gly288, Gly291–Asp312, Phe315–Gly336, Gln339–Gly360, Asn363–Gly384, Arg387–Gly408, Gly411–Gly432, Glu435–Gly456, Gln459–Pro480, Arg483–Ser504, and Arg507–Glu528. N-linked (GlcNAc...) asparagine glycosylation is present at Asn368. Residue Asn515 is glycosylated (N-linked (GlcNAc...) asparagine). The LRRCT domain maps to Asn535–Cys603. 3 cysteine pairs are disulfide-bonded: Cys539–Cys581, Cys541–Cys603, and Cys565–Cys570. Asn578 and Asn586 each carry an N-linked (GlcNAc...) asparagine glycan.

Forms a ternary complex with IGF1 and IGFBP3.

The protein localises to the secreted. Its subcellular location is the extracellular space. In terms of biological role, may have an important role in regulating the access of circulating IGFs to the tissues. The sequence is that of Insulin-like growth factor-binding protein complex acid labile subunit (Igfals) from Mus musculus (Mouse).